Consider the following 122-residue polypeptide: Basic phospholipase A2 homolog myotoxin II (122 aa).

Intrachain disulfides connect C26/C116, C28/C44, C43/C95, C49/C122, C50/C88, C57/C81, and C75/C86. Residues 105 to 118 form an important for membrane-damaging activities in eukaryotes and bacteria; heparin-binding region; the sequence is KKYRYNYLKPFCKK.

The protein belongs to the phospholipase A2 family. Group II subfamily. K49 sub-subfamily. Homodimer; non-covalently linked (probable alternative/compact dimer conformation). As to expression, expressed by the venom gland.

The protein resides in the secreted. Its activity is regulated as follows. Myotoxic activity is inhibited by suramin and rosmarinic acid. Cytotoxic and myotoxic activities are inhibited by pre-incubation with varespladib. Suramin inhibits this myotoxin by (i) direct blockage of the MDoS and MDiS, preventing the toxin/membrane interaction and disruption and (ii) formation of an oligomeric complex, resulting in a tetrameric configuration for which both MDoS and MDiS becomes physically inaccessible, thus avoiding any possibility of toxin-membrane interaction or disruption. Heparin completely inhibits the cytotoxic and bactericidal activities, but only partially the myotoxic, edema-inducing and lethal effects. Functionally, snake venom phospholipase A2 (PLA2) homolog that lacks enzymatic activity. Shows high myotoxin activities. Also shows neurotoxicity, since it induces muscle paralysis when tested on mouse phrenic-diaphragm preparations. Displays edema-inducing activities. Also displays antimicrobial activity against E.coli and C.albicans, as well as antitumoral activity against some human and mice cell lines. In addition, it is effective as parasiticidal agent against Leishmania sp. and S.mansoni. It also disrupts negatively charged liposomes in a dose- and temperature-dependent manner and shows toxicity by intraperitoneal route. In contrast to other phospholipase A2-like toxins, this myotoxin does not require fatty acid binding to be active. This chain is Basic phospholipase A2 homolog myotoxin II, found in Bothrops moojeni (Lance-headed viper).